Reading from the N-terminus, the 74-residue chain is MDMVSLKFIGIGLMAIGIYGAALGVSNIFSSLLSSIARNPSAAENLQRMALIGAGLAEAMGLFSFVIAMLLIFS.

Transmembrane regions (helical) follow at residues 8–28 (FIGI…VSNI) and 52–72 (IGAG…MLLI).

This sequence belongs to the ATPase C chain family. F-type ATPases have 2 components, F(1) - the catalytic core - and F(0) - the membrane proton channel. F(1) has five subunits: alpha(3), beta(3), gamma(1), delta(1), epsilon(1). F(0) has three main subunits: a(1), b(2) and c(10-14). The alpha and beta chains form an alternating ring which encloses part of the gamma chain. F(1) is attached to F(0) by a central stalk formed by the gamma and epsilon chains, while a peripheral stalk is formed by the delta and b chains.

It localises to the cell inner membrane. Functionally, f(1)F(0) ATP synthase produces ATP from ADP in the presence of a proton or sodium gradient. F-type ATPases consist of two structural domains, F(1) containing the extramembraneous catalytic core and F(0) containing the membrane proton channel, linked together by a central stalk and a peripheral stalk. During catalysis, ATP synthesis in the catalytic domain of F(1) is coupled via a rotary mechanism of the central stalk subunits to proton translocation. Key component of the F(0) channel; it plays a direct role in translocation across the membrane. A homomeric c-ring of between 10-14 subunits forms the central stalk rotor element with the F(1) delta and epsilon subunits. The protein is ATP synthase subunit c of Rickettsia akari (strain Hartford).